Consider the following 326-residue polypeptide: MSILPVIFLSIFFYSSFVQTFNAPECIDKGQYFASFMELENEPVILPCPQINTLSSGYNILDILWEKRGADNDRIIPIDNGSNMLILNPTQSDSGIYICITTNETYCDMMSLNLTIVSVSESNIDLISYPQIVNERSTGEMVCPNINAFIASNVNADIIWSGHRRLRNKRLKQRTPGIITIEDVRKNDAGYYTCVLEYIYGGKTYNVTRIVKLEVRDKIIPSTMQLPEGVVTSIGSNLTIACRVSLRPPTTDADVFWISNGMYYEEDDGDGDGRISVANKIYMTDKRRVITSRLNINPVKEEDATTFTCMAFTIPSISKTVTVSIT.

An N-terminal signal peptide occupies residues Met1–Val18. Ig-like domains follow at residues Pro24–Thr115, Ser122–Lys212, and Pro221–Thr322. A disulfide bond links Cys48 and Cys99. Asn80, Asn103, and Asn113 each carry an N-linked (GlcNAc...) asparagine; by host glycan. Cys143 and Cys194 are disulfide-bonded. 2 N-linked (GlcNAc...) asparagine; by host glycosylation sites follow: Asn206 and Asn237. Cys242 and Cys309 form a disulfide bridge.

The protein belongs to the interleukin-1 receptor family. Interacts with mouse Il1b.

The protein localises to the secreted. In terms of biological role, may reduce the host inflammatory response by interacting with inteleukin-1 beta (Il1b) and thus decreasing the association between IL1B and its cellular receptor. This chain is Interleukin-1-binding protein (OPG201), found in Vaccinia virus (strain Ankara) (VACV).